The sequence spans 67 residues: ATP synthase F(0) complex subunit 8 (67 aa).

A helical transmembrane segment spans residues 8-24; that stretch reads TWFTTIVAMILSLFILM. At lysine 54 the chain carries N6-acetyllysine; alternate. The residue at position 54 (lysine 54) is an N6-succinyllysine; alternate. Lysine 57 is subject to N6-acetyllysine.

It belongs to the ATPase protein 8 family. In terms of assembly, component of the ATP synthase complex composed at least of ATP5F1A/subunit alpha, ATP5F1B/subunit beta, ATP5MC1/subunit c (homooctomer), MT-ATP6/subunit a, MT-ATP8/subunit 8, ATP5ME/subunit e, ATP5MF/subunit f, ATP5MG/subunit g, ATP5MK/subunit k, ATP5MJ/subunit j, ATP5F1C/subunit gamma, ATP5F1D/subunit delta, ATP5F1E/subunit epsilon, ATP5PF/subunit F6, ATP5PB/subunit b, ATP5PD/subunit d, ATP5PO/subunit OSCP. ATP synthase complex consists of a soluble F(1) head domain (subunits alpha(3) and beta(3)) - the catalytic core - and a membrane F(0) domain - the membrane proton channel (subunits c, a, 8, e, f, g, k and j). These two domains are linked by a central stalk (subunits gamma, delta, and epsilon) rotating inside the F1 region and a stationary peripheral stalk (subunits F6, b, d, and OSCP). Interacts with PRICKLE3.

Its subcellular location is the mitochondrion membrane. In terms of biological role, subunit 8, of the mitochondrial membrane ATP synthase complex (F(1)F(0) ATP synthase or Complex V) that produces ATP from ADP in the presence of a proton gradient across the membrane which is generated by electron transport complexes of the respiratory chain. ATP synthase complex consist of a soluble F(1) head domain - the catalytic core - and a membrane F(1) domain - the membrane proton channel. These two domains are linked by a central stalk rotating inside the F(1) region and a stationary peripheral stalk. During catalysis, ATP synthesis in the catalytic domain of F(1) is coupled via a rotary mechanism of the central stalk subunits to proton translocation. In vivo, can only synthesize ATP although its ATP hydrolase activity can be activated artificially in vitro. Part of the complex F(0) domain. This Oryctolagus cuniculus (Rabbit) protein is ATP synthase F(0) complex subunit 8.